Here is a 71-residue protein sequence, read N- to C-terminus: Conotoxin PnMEKL-032 (71 aa).

An N-terminal signal peptide occupies residues 1–19 (MQKLIILLLVAAVLMSTQA). Positions 20 to 46 (LFQEKRLKEKINFLSKEKADAEKQQKR) are excised as a propeptide. Cystine bridges form between cysteine 48–cysteine 62, cysteine 55–cysteine 66, and cysteine 61–cysteine 70.

This sequence belongs to the conotoxin O2 superfamily. Expressed by the venom duct.

It is found in the secreted. The chain is Conotoxin PnMEKL-032 from Conus pennaceus (Feathered cone).